The primary structure comprises 239 residues: Probable transcriptional regulatory protein LMOf2365_0385 (239 aa).

Belongs to the TACO1 family. YeeN subfamily.

It localises to the cytoplasm. The protein is Probable transcriptional regulatory protein LMOf2365_0385 of Listeria monocytogenes serotype 4b (strain F2365).